A 239-amino-acid polypeptide reads, in one-letter code: Probable transcriptional regulatory protein MG332 (239 aa).

Belongs to the TACO1 family.

It localises to the cytoplasm. This Mycoplasma genitalium (strain ATCC 33530 / DSM 19775 / NCTC 10195 / G37) (Mycoplasmoides genitalium) protein is Probable transcriptional regulatory protein MG332.